Reading from the N-terminus, the 259-residue chain is Phosphate import ATP-binding protein PstB (259 aa).

An ABC transporter domain is found at 13-254 (IQVRDLNFYY…PAQRQTEDYI (242 aa)). 45-52 (GPSGCGKS) lines the ATP pocket.

The protein belongs to the ABC transporter superfamily. Phosphate importer (TC 3.A.1.7) family. The complex is composed of two ATP-binding proteins (PstB), two transmembrane proteins (PstC and PstA) and a solute-binding protein (PstS).

Its subcellular location is the cell inner membrane. It catalyses the reaction phosphate(out) + ATP + H2O = ADP + 2 phosphate(in) + H(+). In terms of biological role, part of the ABC transporter complex PstSACB involved in phosphate import. Responsible for energy coupling to the transport system. The protein is Phosphate import ATP-binding protein PstB of Edwardsiella tarda.